A 169-amino-acid chain; its full sequence is Large ribosomal subunit protein uL23 (169 aa).

The segment at 1-20 (MAGKKVKSNTPKQDLSVSKS) is disordered. Over residues 8–20 (SNTPKQDLSVSKS) the composition is skewed to polar residues.

The protein belongs to the universal ribosomal protein uL23 family.

In terms of biological role, this protein binds to a specific region on the 26S rRNA. This is Large ribosomal subunit protein uL23 (rpl23a) from Dictyostelium discoideum (Social amoeba).